A 336-amino-acid polypeptide reads, in one-letter code: Large ribosomal subunit protein uL1m (336 aa).

The N-terminal 50 residues, 1-50, are a transit peptide targeting the mitochondrion; that stretch reads MAAAVRCLRRVLIHHQRHCLCKMASQASLYPCSVNSLLHNRHFAAAAAAA. Residue Ser85 is modified to Phosphoserine.

It belongs to the universal ribosomal protein uL1 family.

The protein localises to the mitochondrion. The polypeptide is Large ribosomal subunit protein uL1m (Mrpl1) (Mus musculus (Mouse)).